Consider the following 154-residue polypeptide: Mitochondrial fission 1 protein (154 aa).

Over 1-124 the chain is Cytoplasmic; it reads MEDLLNEVVP…KEIDKEVAKG (124 aa). Residues 125–145 traverse the membrane as a helical segment; the sequence is MVVAGGAALVLGGILGLGIAM. Residues 146–154 are Mitochondrial intermembrane-facing; sequence ARNKQKREK.

It belongs to the FIS1 family.

It localises to the mitochondrion outer membrane. In terms of biological role, involved in the fragmentation of the mitochondrial network and its perinuclear clustering. Functions downstream of Pink1 and upstream of Drp1 to regulate mitochondrial fission. This is Mitochondrial fission 1 protein from Drosophila melanogaster (Fruit fly).